The primary structure comprises 163 residues: Thiol peroxidase (163 aa).

Positions 16-162 (LQVGDTAHDF…YDAAIAAVKN (147 aa)) constitute a Thioredoxin domain. C58 (cysteine sulfenic acid (-SOH) intermediate) is an active-site residue. The cysteines at positions 58 and 92 are disulfide-linked.

Belongs to the peroxiredoxin family. Tpx subfamily. As to quaternary structure, homodimer.

It catalyses the reaction a hydroperoxide + [thioredoxin]-dithiol = an alcohol + [thioredoxin]-disulfide + H2O. Functionally, thiol-specific peroxidase that catalyzes the reduction of hydrogen peroxide and organic hydroperoxides to water and alcohols, respectively. Plays a role in cell protection against oxidative stress by detoxifying peroxides. This Streptococcus gordonii protein is Thiol peroxidase.